Reading from the N-terminus, the 865-residue chain is Rifampicin phosphotransferase (865 aa).

An ATP-binding region spans residues S2–T314. K23, R117, G132, T136, Q183, E297, Q309, and R311 together coordinate ATP. The interval F327–A752 is rifampicin-binding. Residues E403–A430 are disordered. Residues P409–G424 show a composition bias toward low complexity. The swivel phosphohistidine stretch occupies residues G765–L863. Catalysis depends on H823, which acts as the Tele-phosphohistidine intermediate.

It belongs to the rifampicin phosphotransferase family.

The catalysed reaction is rifampicin + ATP + H2O = 21-phosphorifampicin + AMP + phosphate + 2 H(+). Catalyzes the phosphorylation of rifampicin, also known as rifampin (RIF), leading to its inactivation. Confers high level resistance to a variety of clinically used rifamycin antibiotics. This Streptomyces sp protein is Rifampicin phosphotransferase.